The chain runs to 97 residues: Co-chaperonin GroES (97 aa).

Belongs to the GroES chaperonin family. In terms of assembly, heptamer of 7 subunits arranged in a ring. Interacts with the chaperonin GroEL.

It localises to the cytoplasm. Together with the chaperonin GroEL, plays an essential role in assisting protein folding. The GroEL-GroES system forms a nano-cage that allows encapsulation of the non-native substrate proteins and provides a physical environment optimized to promote and accelerate protein folding. GroES binds to the apical surface of the GroEL ring, thereby capping the opening of the GroEL channel. The polypeptide is Co-chaperonin GroES (Klebsiella pneumoniae subsp. pneumoniae (strain ATCC 700721 / MGH 78578)).